The sequence spans 538 residues: Chaperonin GroEL (538 aa).

ATP contacts are provided by residues 29–32 (TLGP), 86–90 (DGTTT), Gly413, 479–481 (DAL), and Asp495.

Belongs to the chaperonin (HSP60) family. As to quaternary structure, forms a cylinder of 14 subunits composed of two heptameric rings stacked back-to-back. Interacts with the co-chaperonin GroES.

The protein resides in the cytoplasm. It catalyses the reaction ATP + H2O + a folded polypeptide = ADP + phosphate + an unfolded polypeptide.. Functionally, together with its co-chaperonin GroES, plays an essential role in assisting protein folding. The GroEL-GroES system forms a nano-cage that allows encapsulation of the non-native substrate proteins and provides a physical environment optimized to promote and accelerate protein folding. The protein is Chaperonin GroEL of Thermotoga neapolitana.